The following is a 355-amino-acid chain: Chemerin-like receptor 2 (355 aa).

The Extracellular portion of the chain corresponds to 1 to 41 (MEDLEETLFEEFENYSYDLDYYSLESDLEEKVQLGVVHWVS). Asn14 carries an N-linked (GlcNAc...) asparagine glycan. A helical transmembrane segment spans residues 42-62 (LVLYCLAFVLGIPGNAIVIWF). The Cytoplasmic segment spans residues 63–73 (TGFKWKKTVTT). The helical transmembrane segment at 74 to 94 (LWFLNLAIADFIFLLFLPLYI) threads the bilayer. The Extracellular segment spans residues 95-112 (SYVAMNFHWPFGIWLCKA). A disulfide bridge links Cys110 with Cys187. A helical transmembrane segment spans residues 113–133 (NSFTAQLNMFASVFFLTVISL). At 134 to 154 (DHYIHLIHPVLSHRHRTLKNS) the chain is on the cytoplasmic side. The helical transmembrane segment at 155–175 (LIVIIFIWLLASLIGGPALYF) threads the bilayer. The Extracellular portion of the chain corresponds to 176–210 (RDTVEFNNHTLCYNNFQKHDPDLTLIRHHVLTWVK). A helical membrane pass occupies residues 211-231 (FIIGYLFPLLTMSICYLCLIF). Topologically, residues 232-247 (KVKKRSILISSRHFWT) are cytoplasmic. A helical membrane pass occupies residues 248–268 (ILVVVVAFVVCWTPYHLFSIW). Residues 269 to 286 (ELTIHHNSYSHHVMQAGI) lie on the Extracellular side of the membrane. The helical transmembrane segment at 287 to 307 (PLSTGLAFLNSCLNPILYVLI) threads the bilayer. Over 308–355 (SKKFQARFRSSVAEILKYTLWEVSCSGTVSEQLRNSETKNLCLLETAQ) the chain is Cytoplasmic.

The protein belongs to the chemokine-like receptor (CMKLR) family. In terms of tissue distribution, expressed in hippocampus.

It localises to the cell membrane. Receptor for chemoattractant adipokine chemerin/RARRES2 suggesting a role for this receptor in the regulation of inflammation and energy homesotasis. Signals mainly via beta-arrestin pathway. Binding of RARRES2 activates weakly G proteins, calcium mobilization and MAPK1/MAPK3 (ERK1/2) phosphorylation too. Also acts as a receptor for TAFA1, mediates its effects on neuronal stem-cell proliferation and differentiation via the activation of ROCK/ERK and ROCK/STAT3 signaling pathway. Functionally, (Microbial infection) Coreceptor for HIV-1. The protein is Chemerin-like receptor 2 of Homo sapiens (Human).